Reading from the N-terminus, the 481-residue chain is Transmembrane protein 39A (481 aa).

The next 8 helical transmembrane spans lie at 74 to 94 (LFETLLLLYLLVALLVQYINI), 109 to 129 (STSLNFHLMDAHLAVFIAVML), 150 to 170 (LCYVLLLVVRVCVLTLCGWVL), 182 to 202 (SVLKLLFLGYPFGVYVPLCCL), 278 to 298 (EVLFNSLLSAYYVAFLPLCFV), 313 to 333 (LIMVWINAFVMLMSHLLPPHY), 411 to 431 (LLNVLIGIECSVVVYQLYSLL), and 437 to 457 (NHTLSLGLILVCNYYVLFKLL).

It belongs to the TMEM39 family.

Its subcellular location is the endoplasmic reticulum membrane. Functionally, regulates autophagy by controlling the spatial distribution and levels of the intracellular phosphatidylinositol 4-phosphate (PtdIns(4)P) pools. Modulates (PtdIns(4)P) levels by regulating the ER-to-Golgi trafficking of the phosphatidylinositide phosphatase SACM1L. This chain is Transmembrane protein 39A (tmem39a), found in Danio rerio (Zebrafish).